A 340-amino-acid polypeptide reads, in one-letter code: Ribonucleoside-diphosphate reductase small subunit (340 aa).

Residues 180 to 200 traverse the membrane as a helical segment; the sequence is FILMILIEGIFFAASFAAIAY.

It belongs to the ribonucleoside diphosphate reductase small chain family. In terms of assembly, heterotetramer composed of a homodimer of the large subunit (R1) and a homodimer of the small subunit (R2). Larger multisubunit protein complex are also active, composed of (R1)n(R2)n. Fe cation serves as cofactor.

It localises to the host membrane. It catalyses the reaction a 2'-deoxyribonucleoside 5'-diphosphate + [thioredoxin]-disulfide + H2O = a ribonucleoside 5'-diphosphate + [thioredoxin]-dithiol. Functionally, ribonucleoside-diphosphate reductase holoenzyme provides the precursors necessary for viral DNA synthesis. Allows virus growth in non-dividing cells, as well as reactivation from latency in infected hosts. Catalyzes the biosynthesis of deoxyribonucleotides from the corresponding ribonucleotides. This Human herpesvirus 1 (strain 17) (HHV-1) protein is Ribonucleoside-diphosphate reductase small subunit.